Here is a 472-residue protein sequence, read N- to C-terminus: Chromosomal replication initiator protein DnaA (472 aa).

The tract at residues Met-1 to Glu-73 is domain I, interacts with DnaA modulators. Residues Glu-73 to Ser-128 form a domain II region. The tract at residues Glu-92–Gly-127 is disordered. The segment covering Val-97–Ser-112 has biased composition (basic and acidic residues). The segment at Pro-129–Ser-351 is domain III, AAA+ region. ATP contacts are provided by Gly-176, Gly-178, Lys-179, and Thr-180. The segment at Lys-352–Glu-472 is domain IV, binds dsDNA.

It belongs to the DnaA family. Oligomerizes as a right-handed, spiral filament on DNA at oriC.

It is found in the cytoplasm. Functionally, plays an essential role in the initiation and regulation of chromosomal replication. ATP-DnaA binds to the origin of replication (oriC) to initiate formation of the DNA replication initiation complex once per cell cycle. Binds the DnaA box (a 9 base pair repeat at the origin) and separates the double-stranded (ds)DNA. Forms a right-handed helical filament on oriC DNA; dsDNA binds to the exterior of the filament while single-stranded (ss)DNA is stabiized in the filament's interior. The ATP-DnaA-oriC complex binds and stabilizes one strand of the AT-rich DNA unwinding element (DUE), permitting loading of DNA polymerase. After initiation quickly degrades to an ADP-DnaA complex that is not apt for DNA replication. Binds acidic phospholipids. This chain is Chromosomal replication initiator protein DnaA, found in Rhodopseudomonas palustris (strain HaA2).